Consider the following 376-residue polypeptide: Probable sister chromatid cohesion protein DCC1 (376 aa).

Positions 213–232 are disordered; that stretch reads QKSPTNSGGGGEEIKGGGGD. The span at 219 to 232 shows a compositional bias: gly residues; sequence SGGGGEEIKGGGGD.

Belongs to the DCC1 family.

Its subcellular location is the nucleus. Loads PCNA onto primed templates regulating velocity, spacing and restart activity of replication forks. May couple DNA replication to sister chromatid cohesion. This chain is Probable sister chromatid cohesion protein DCC1, found in Dictyostelium discoideum (Social amoeba).